Here is a 204-residue protein sequence, read N- to C-terminus: Cobalt-containing nitrile hydratase subunit alpha (204 aa).

Co(2+)-binding residues include Cys-108, Cys-111, Ser-112, and Cys-113. Cys-111 carries the cysteine sulfinic acid (-SO2H) modification. A Cysteine sulfenic acid (-SOH) modification is found at Cys-113.

It belongs to the nitrile hydratase subunit alpha family. As to quaternary structure, heterotetramer of two alpha and two beta chains. Requires Co(2+) as cofactor.

It carries out the reaction an aliphatic primary amide = an aliphatic nitrile + H2O. Functionally, NHase catalyzes the hydration of various nitrile compounds to the corresponding amides. This is Cobalt-containing nitrile hydratase subunit alpha from Pseudonocardia thermophila.